Reading from the N-terminus, the 417-residue chain is Probable uracil permease (417 aa).

Topologically, residues 1-13 (MTNQNPPVLLEQN) are cytoplasmic. Residues 14-37 (HAKQAFVGLQMLFVAFGALVLVPL) form a helical membrane-spanning segment. Residues 38 to 41 (ITGL) are Periplasmic-facing. Residues 42 to 61 (NANTALLTAGIGTLLFQLCT) form a helical membrane-spanning segment. Residues 62–64 (GRQ) lie on the Cytoplasmic side of the membrane. The discontinuously helical transmembrane segment at 65–81 (VPIFLASSFAFIAPIQY) threads the bilayer. Position 73 (phenylalanine 73) interacts with uracil. Residues 83–90 (VTTWGIAT) are Periplasmic-facing. The helical transmembrane segment at 91 to 111 (TMGGLVFTGLVYFALSTLVKI) threads the bilayer. The Cytoplasmic portion of the chain corresponds to 112–123 (KGAGALQKVFPP). Residues 124–145 (VVVGPVIIIIGMGLAPVAVDMA) traverse the membrane as a helical segment. Topologically, residues 146–154 (LGKNSTYQY) are periplasmic. A helical membrane pass occupies residues 155–170 (NDAVFVSMATLLTTLG). Residues 171–177 (VAVFAKG) are Cytoplasmic-facing. A helical membrane pass occupies residues 178 to 198 (MMKLIPIMFGIVVGYILCLFL). The Periplasmic portion of the chain corresponds to 199–223 (GLINFQPVIDAPWFSVPEITTPEFK). Residues 224–247 (LEAILYLLPIAIAPAVEHVGGIMA) form a helical membrane-spanning segment. Glutamate 240 is a binding site for uracil. Residues 248-260 (ISSVTGKDFLQKP) are Cytoplasmic-facing. Residues 261-280 (GLHRTLLGDGIATSAASFLG) traverse the membrane as a helical segment. A discontinuously helical transmembrane segment spans residues 281–297 (GPPNTTYAEVTGAVMLT). Residue glutamate 289 coordinates uracil. Topologically, residues 298-300 (RNF) are cytoplasmic. Residues 301-318 (NPKIMTWAAVWAIAISFC) form a helical membrane-spanning segment. Residues 319–331 (GKVGAFLSTIPTI) are Periplasmic-facing. The helical transmembrane segment at 332–353 (VMGGIMMLVFGSIAVVGMSTLI) threads the bilayer. Residues 354–364 (RGKVDVTEARN) lie on the Cytoplasmic side of the membrane. Residues 365-400 (LCIISVVMTFGIGGMFVNFGEVSLKGISLCAVVAIL) constitute an intramembrane region (discontinuously helical). The Cytoplasmic segment spans residues 401–416 (LNLILPKAKNTPIEEN).

It belongs to the nucleobase:cation symporter-2 (NCS2) (TC 2.A.40) family.

Its subcellular location is the cell inner membrane. The catalysed reaction is uracil(in) + H(+)(in) = uracil(out) + H(+)(out). Transport of uracil in the cell. This Pasteurella multocida (strain Pm70) protein is Probable uracil permease (uraA).